A 325-amino-acid chain; its full sequence is Protein UL76 (325 aa).

The tract at residues 222 to 286 (ARASAVAGGR…VRGGGAVEPA (65 aa)) is disordered. Residues 247–258 (GPGAQTVSASGA) are compositionally biased toward low complexity.

It belongs to the herpesviridae UL24 family.

It localises to the virion. The protein localises to the host cytoplasm. It is found in the host nucleus. The protein resides in the host nucleolus. Its subcellular location is the host Golgi apparatus. Its function is as follows. May participate in nuclear egress of viral particles. Plays a role in the dispersal of several host nucleolar proteins including NCL/nucleolin and NPM1. Since deletion of host NCL/nucleolin negatively impact on nuclear egress, UL76 supposedly acts on this process through its effect on host nucleoli. Induces cell cycle arrest in host cells at the G2/M phase following by apoptosis. The mechanism involves the inhibition of host mitotic complex cyclinB/CDK1. The protein is Protein UL76 (UL76) of Human cytomegalovirus (strain Merlin) (HHV-5).